Consider the following 1165-residue polypeptide: Leptin receptor (1165 aa).

The signal sequence occupies residues 1–21 (MICQKFCVVLLHWEFIYVITA). Over 22–839 (FNLSYPITPW…QDDIEKHQSD (818 aa)) the chain is Extracellular. Asn-23, Asn-41, Asn-56, Asn-73, Asn-81, and Asn-98 each carry an N-linked (GlcNAc...) asparagine glycan. 5 disulfide bridges follow: Cys-37–Cys-90, Cys-89–Cys-99, Cys-131–Cys-142, Cys-186–Cys-196, and Cys-188–Cys-193. N-linked (GlcNAc...) asparagine glycosylation is present at Asn-187. N-linked (GlcNAc...) asparagine glycosylation is found at Asn-206, Asn-276, Asn-347, and Asn-397. Residues 239-333 (PPLGLHMEIT…TPRVFTTQDV (95 aa)) form the Fibronectin type-III 1 domain. One can recognise an Ig-like domain in the interval 331-429 (QDVIYFPPKI…HRYAELYVID (99 aa)). 5 cysteine pairs are disulfide-bonded: Cys-352/Cys-412, Cys-413/Cys-418, Cys-436/Cys-447, Cys-473/Cys-528, and Cys-488/Cys-498. Residues 467–484 (HRSSLYCSDIPSIHPISE) form a leptin-binding region. N-linked (GlcNAc...) asparagine glycans are attached at residues Asn-516, Asn-624, Asn-659, Asn-688, Asn-697, Asn-728, and Asn-750. 3 consecutive Fibronectin type-III domains span residues 539-634 (PPSS…TVVM), 639-732 (PMRG…LTFS), and 740-833 (IVQS…QDDI). The WSXWS motif signature appears at 622–626 (WSNWS). Residues 840–862 (AGLYVIVPVIISSSILLLGTLLI) form a helical membrane-spanning segment. Topologically, residues 863-1165 (SHQRMKKLFW…MENKMCDLTV (303 aa)) are cytoplasmic. The Box 1 motif motif lies at 871–879 (FWEDVPNPK). At Ser-882 the chain carries Phosphoserine. The tract at residues 893–898 (ETFEHL) is required for JAK2 activation. The interval 898–906 (LFIKHTASV) is required for STAT3 phosphorylation. Residue Tyr-986 is modified to Phosphotyrosine; by JAK2. At Tyr-1079 the chain carries Phosphotyrosine. Tyr-1141 is modified (phosphotyrosine; by JAK2).

It belongs to the type I cytokine receptor family. Type 2 subfamily. Present as a mixture of monomers and dimers. The phosphorylated receptor binds a number of SH2 domain-containing proteins such as JAK2, STAT3, PTPN11, and SOCS3. Interaction with SOCS3 inhibits JAK/STAT signaling and MAPK cascade. On ligand binding, phosphorylated on two conserved C-terminal tyrosine residues (isoform B only) by JAK2. Tyr-986 is required for complete binding and activation of PTPN11, ERK/FOS activation,for interaction with SOCS3 and SOCS3 mediated inhibition of leptin signaling. Phosphorylation on Tyr-1141 is required for STAT3 binding/activation. Phosphorylation of Tyr-1079 has a more accessory role. As to expression, isoform A is expressed in fetal liver and in hematopoietic tissues and choroid plexus. In adults highest expression in heart, liver, small intestine, prostate and ovary. Low level in lung and kidney. Isoform B is highly expressed in hypothalamus, but also in skeletal muscle. Detected in fundic and antral epithelial cells of the gastric mucosa. Isoform B and isoform A are expressed by NK cells (at protein level).

It localises to the cell membrane. Its subcellular location is the basolateral cell membrane. The protein resides in the secreted. Functionally, receptor for hormone LEP/leptin. On ligand binding, mediates LEP central and peripheral effects through the activation of different signaling pathways such as JAK2/STAT3 and MAPK cascade/FOS. In the hypothalamus, LEP acts as an appetite-regulating factor that induces a decrease in food intake and an increase in energy consumption by inducing anorexinogenic factors and suppressing orexigenic neuropeptides, also regulates bone mass and secretion of hypothalamo-pituitary-adrenal hormones. In the periphery, increases basal metabolism, influences reproductive function, regulates pancreatic beta-cell function and insulin secretion, is pro-angiogenic and affects innate and adaptive immunity. Control of energy homeostasis and melanocortin production (stimulation of POMC and full repression of AgRP transcription) is mediated by STAT3 signaling, whereas distinct signals regulate NPY and the control of fertility, growth and glucose homeostasis. Involved in the regulation of counter-regulatory response to hypoglycemia by inhibiting neurons of the parabrachial nucleus. Has a specific effect on T lymphocyte responses, differentially regulating the proliferation of naive and memory T -ells. Leptin increases Th1 and suppresses Th2 cytokine production. Its function is as follows. May transport LEP across the blood-brain barrier. Binds LEP and mediates LEP endocytosis. Does not induce phosphorylation of and activate STAT3. Antagonizes Isoform A and isoform B-mediated LEP binding and endocytosis. This is Leptin receptor (LEPR) from Homo sapiens (Human).